The primary structure comprises 302 residues: Aurora/IPL1-related protein kinase 2 (302 aa).

The segment covering 1–17 (MENKPQILQTKSKNTPN) has biased composition (polar residues). The tract at residues 1–23 (MENKPQILQTKSKNTPNKGGKLS) is disordered. The region spanning 27-277 (FEIGRPLGKG…LQEVKDHYWV (251 aa)) is the Protein kinase domain. ATP-binding positions include 33-41 (LGKGKFGSV) and lysine 56. Aspartate 150 (proton acceptor) is an active-site residue.

This sequence belongs to the protein kinase superfamily. Ser/Thr protein kinase family. In terms of assembly, interacts with zen-4 and icp-1. Part of a complex containing at least air-2; icp-1; csc-1 and bir-1. Interacts with tlk-1 and bmk-1.

It is found in the cytoplasm. It localises to the cytoskeleton. The protein localises to the chromosome. Its subcellular location is the midbody. The catalysed reaction is L-seryl-[protein] + ATP = O-phospho-L-seryl-[protein] + ADP + H(+). It carries out the reaction L-threonyl-[protein] + ATP = O-phospho-L-threonyl-[protein] + ADP + H(+). In terms of biological role, serine/threonine-protein kinase which mediates both meiotic and mitotic chromosome segregation. Required for histone H3 'Ser-10' phosphorylation. Phosphorylates tlk-1 and zen-4. This chain is Aurora/IPL1-related protein kinase 2 (air-2), found in Caenorhabditis briggsae.